A 377-amino-acid polypeptide reads, in one-letter code: Chaperone protein DnaJ (377 aa).

A J domain is found at 5–69 (EYYDRLGVSK…QKRAAYDQYG (65 aa)). The CR-type zinc-finger motif lies at 133–215 (GTEKEVHYNR…CHGTGHEKQS (83 aa)). Positions 146, 149, 163, 166, 189, 192, 203, and 206 each coordinate Zn(2+). CXXCXGXG motif repeat units lie at residues 146–153 (CHTCNGSG), 163–170 (CSKCHGSG), 189–196 (CDVCHGTG), and 203–210 (CPTCHGTG).

Belongs to the DnaJ family. In terms of assembly, homodimer. Zn(2+) is required as a cofactor.

The protein localises to the cytoplasm. Functionally, participates actively in the response to hyperosmotic and heat shock by preventing the aggregation of stress-denatured proteins and by disaggregating proteins, also in an autonomous, DnaK-independent fashion. Unfolded proteins bind initially to DnaJ; upon interaction with the DnaJ-bound protein, DnaK hydrolyzes its bound ATP, resulting in the formation of a stable complex. GrpE releases ADP from DnaK; ATP binding to DnaK triggers the release of the substrate protein, thus completing the reaction cycle. Several rounds of ATP-dependent interactions between DnaJ, DnaK and GrpE are required for fully efficient folding. Also involved, together with DnaK and GrpE, in the DNA replication of plasmids through activation of initiation proteins. The chain is Chaperone protein DnaJ from Streptococcus mutans serotype c (strain ATCC 700610 / UA159).